Reading from the N-terminus, the 330-residue chain is Malate dehydrogenase (330 aa).

15–21 is an NAD(+) binding site; sequence GGTGQIA. The substrate site is built by Arg96 and Arg102. NAD(+) is bound by residues Asn109, Gln116, and 133–135; that span reads VGN. Positions 135 and 166 each coordinate substrate. His191 acts as the Proton acceptor in catalysis.

Belongs to the LDH/MDH superfamily. MDH type 2 family.

It carries out the reaction (S)-malate + NAD(+) = oxaloacetate + NADH + H(+). Its function is as follows. Catalyzes the reversible oxidation of malate to oxaloacetate. The sequence is that of Malate dehydrogenase from Chlamydia caviae (strain ATCC VR-813 / DSM 19441 / 03DC25 / GPIC) (Chlamydophila caviae).